A 485-amino-acid polypeptide reads, in one-letter code: Phosphoglucosamine mutase (485 aa).

The active-site Phosphoserine intermediate is the serine 133. Residues serine 133, aspartate 274, aspartate 276, and aspartate 278 each contribute to the Mg(2+) site. Serine 133 is modified (phosphoserine).

The protein belongs to the phosphohexose mutase family. Mg(2+) serves as cofactor. Activated by phosphorylation.

The enzyme catalyses alpha-D-glucosamine 1-phosphate = D-glucosamine 6-phosphate. Its function is as follows. Catalyzes the conversion of glucosamine-6-phosphate to glucosamine-1-phosphate. This Rippkaea orientalis (strain PCC 8801 / RF-1) (Cyanothece sp. (strain PCC 8801)) protein is Phosphoglucosamine mutase.